The primary structure comprises 80 residues: UPF0291 protein EF_1580 (80 aa).

The disordered stretch occupies residues 60-80 (TDVTPEKLKKIQREKGLHNRK). Over residues 63-80 (TPEKLKKIQREKGLHNRK) the composition is skewed to basic and acidic residues.

It belongs to the UPF0291 family.

It localises to the cytoplasm. This is UPF0291 protein EF_1580 from Enterococcus faecalis (strain ATCC 700802 / V583).